We begin with the raw amino-acid sequence, 535 residues long: Peptide chain release factor 3 (535 aa).

Residues alanine 8 to glycine 276 form the tr-type G domain. GTP contacts are provided by residues serine 17–threonine 24, aspartate 85–histidine 89, and asparagine 139–aspartate 142.

It belongs to the TRAFAC class translation factor GTPase superfamily. Classic translation factor GTPase family. PrfC subfamily.

It is found in the cytoplasm. In terms of biological role, increases the formation of ribosomal termination complexes and stimulates activities of RF-1 and RF-2. It binds guanine nucleotides and has strong preference for UGA stop codons. It may interact directly with the ribosome. The stimulation of RF-1 and RF-2 is significantly reduced by GTP and GDP, but not by GMP. This Bordetella avium (strain 197N) protein is Peptide chain release factor 3.